We begin with the raw amino-acid sequence, 708 residues long: Ion-translocating oxidoreductase complex subunit C (708 aa).

4Fe-4S ferredoxin-type domains are found at residues 369–397 and 407–436; these read GEPQ…QQLY and KATT…VQYF. The [4Fe-4S] cluster site is built by C377, C380, C383, C387, C416, C419, C422, and C426. Residues 663–684 form a disordered region; sequence KARKLEQQQTNAEPEEQVDPRK.

This sequence belongs to the 4Fe4S bacterial-type ferredoxin family. RnfC subfamily. In terms of assembly, the complex is composed of six subunits: RsxA, RsxB, RsxC, RsxD, RsxE and RsxG. [4Fe-4S] cluster is required as a cofactor.

It is found in the cell inner membrane. In terms of biological role, part of a membrane-bound complex that couples electron transfer with translocation of ions across the membrane. Required to maintain the reduced state of SoxR. The polypeptide is Ion-translocating oxidoreductase complex subunit C (Shigella boydii serotype 18 (strain CDC 3083-94 / BS512)).